The following is a 72-amino-acid chain: Translation initiation factor IF-1 (72 aa).

Residues 1 to 72 form the S1-like domain; the sequence is MAGNDVIEIE…TKGRITYRHK (72 aa).

It belongs to the IF-1 family. Component of the 30S ribosomal translation pre-initiation complex which assembles on the 30S ribosome in the order IF-2 and IF-3, IF-1 and N-formylmethionyl-tRNA(fMet); mRNA recruitment can occur at any time during PIC assembly.

It localises to the cytoplasm. Its function is as follows. One of the essential components for the initiation of protein synthesis. Stabilizes the binding of IF-2 and IF-3 on the 30S subunit to which N-formylmethionyl-tRNA(fMet) subsequently binds. Helps modulate mRNA selection, yielding the 30S pre-initiation complex (PIC). Upon addition of the 50S ribosomal subunit IF-1, IF-2 and IF-3 are released leaving the mature 70S translation initiation complex. The sequence is that of Translation initiation factor IF-1 from Oenococcus oeni (strain ATCC BAA-331 / PSU-1).